Consider the following 292-residue polypeptide: Glycine--tRNA ligase alpha subunit (292 aa).

It belongs to the class-II aminoacyl-tRNA synthetase family. As to quaternary structure, tetramer of two alpha and two beta subunits.

The protein localises to the cytoplasm. It catalyses the reaction tRNA(Gly) + glycine + ATP = glycyl-tRNA(Gly) + AMP + diphosphate. This Syntrophus aciditrophicus (strain SB) protein is Glycine--tRNA ligase alpha subunit.